Consider the following 143-residue polypeptide: Sorting nexin-3 (143 aa).

Residues 23 to 140 (NILEIDVINP…SSFLQSPEFK (118 aa)) form the PX domain. A 1,2-diacyl-sn-glycero-3-phospho-(1D-myo-inositol-3-phosphate) is bound by residues R66, S68, K92, R97, and R106.

It belongs to the sorting nexin family.

It localises to the cytoplasm. It is found in the golgi apparatus membrane. The protein localises to the prevacuolar compartment membrane. Functionally, required for retention of late Golgi membrane proteins. Component of the retrieval machinery that functions by direct interaction with the cytosolic tails of certain TGN membrane proteins during the sorting/budding process at the prevacuolar compartment. Binds phosphatidylinositol 3-phosphate (PtdIns(P3)). This Schizosaccharomyces pombe (strain 972 / ATCC 24843) (Fission yeast) protein is Sorting nexin-3 (snx3).